The sequence spans 209 residues: Scoloptoxin SSD346 (209 aa).

The signal sequence occupies residues 1-22 (NILLSSTLFVLLMFQIIGSGLG).

In terms of processing, contains 2 disulfide bonds. In terms of tissue distribution, expressed by the venom gland.

Its subcellular location is the secreted. Functionally, may act as a voltage-gated calcium channel inhibitor. This Scolopendra dehaani (Thai centipede) protein is Scoloptoxin SSD346.